We begin with the raw amino-acid sequence, 817 residues long: LPS-assembly protein LptD (817 aa).

The signal sequence occupies residues 1–26; that stretch reads MPALVVSPDLVRGAAGASAAPTPAPA. The tract at residues 1-101 is disordered; the sequence is MPALVVSPDL…ARKPGSTEVR (101 aa). A compositionally biased stretch (low complexity) spans 13 to 90; it reads GAAGASAAPT…PAASASPADA (78 aa).

The protein belongs to the LptD family. Component of the lipopolysaccharide transport and assembly complex. Interacts with LptE and LptA.

Its subcellular location is the cell outer membrane. Its function is as follows. Together with LptE, is involved in the assembly of lipopolysaccharide (LPS) at the surface of the outer membrane. In Azoarcus sp. (strain BH72), this protein is LPS-assembly protein LptD.